Here is a 294-residue protein sequence, read N- to C-terminus: GTPase Era (294 aa).

The Era-type G domain occupies 4-170; it reads KSGFVSVIGR…VEEIFTFLPE (167 aa). The G1 stretch occupies residues 12-19; it reads GRPNVGKS. 12–19 provides a ligand contact to GTP; sequence GRPNVGKS. Positions 38–42 are G2; the sequence is QTTRN. Residues 59–62 are G3; that stretch reads DTPG. GTP contacts are provided by residues 59 to 63 and 121 to 124; these read DTPGI and NKID. The tract at residues 121 to 124 is G4; sequence NKID. The G5 stretch occupies residues 149 to 151; it reads ISA. Positions 201 to 278 constitute a KH type-2 domain; that stretch reads TREEVPYGVA…YLDLWVKIEK (78 aa).

It belongs to the TRAFAC class TrmE-Era-EngA-EngB-Septin-like GTPase superfamily. Era GTPase family. In terms of assembly, monomer.

The protein localises to the cytoplasm. It localises to the cell inner membrane. In terms of biological role, an essential GTPase that binds both GDP and GTP, with rapid nucleotide exchange. Plays a role in 16S rRNA processing and 30S ribosomal subunit biogenesis and possibly also in cell cycle regulation and energy metabolism. This Halothermothrix orenii (strain H 168 / OCM 544 / DSM 9562) protein is GTPase Era.